Here is a 448-residue protein sequence, read N- to C-terminus: Trigger factor (448 aa).

The 86-residue stretch at 172 to 257 folds into the PPIase FKBP-type domain; sequence GDRVTVDFVG…MKKIEWPHMP (86 aa).

The protein belongs to the FKBP-type PPIase family. Tig subfamily.

The protein resides in the cytoplasm. It carries out the reaction [protein]-peptidylproline (omega=180) = [protein]-peptidylproline (omega=0). Involved in protein export. Acts as a chaperone by maintaining the newly synthesized protein in an open conformation. Functions as a peptidyl-prolyl cis-trans isomerase. This chain is Trigger factor, found in Burkholderia vietnamiensis (strain G4 / LMG 22486) (Burkholderia cepacia (strain R1808)).